A 211-amino-acid chain; its full sequence is Guanylate kinase (211 aa).

Positions 5-184 (GLLIVFSGPS…AAERVKRIIE (180 aa)) constitute a Guanylate kinase-like domain. 12-19 (GPSGVGKG) lines the ATP pocket.

This sequence belongs to the guanylate kinase family.

The protein resides in the cytoplasm. It carries out the reaction GMP + ATP = GDP + ADP. In terms of biological role, essential for recycling GMP and indirectly, cGMP. The sequence is that of Guanylate kinase from Streptococcus pyogenes serotype M3 (strain SSI-1).